The following is a 369-amino-acid chain: UPF0284 protein cce_1085 (369 aa).

This sequence belongs to the UPF0284 family.

The protein is UPF0284 protein cce_1085 of Crocosphaera subtropica (strain ATCC 51142 / BH68) (Cyanothece sp. (strain ATCC 51142)).